Here is a 252-residue protein sequence, read N- to C-terminus: Segregation and condensation protein A (252 aa).

The disordered stretch occupies residues 117–136; it reads EREEERQNAFTKPPSDLSEF.

It belongs to the ScpA family. As to quaternary structure, component of a cohesin-like complex composed of ScpA, ScpB and the Smc homodimer, in which ScpA and ScpB bind to the head domain of Smc. The presence of the three proteins is required for the association of the complex with DNA.

The protein localises to the cytoplasm. Functionally, participates in chromosomal partition during cell division. May act via the formation of a condensin-like complex containing Smc and ScpB that pull DNA away from mid-cell into both cell halves. The polypeptide is Segregation and condensation protein A (Bacillus pumilus (strain SAFR-032)).